A 308-amino-acid chain; its full sequence is Protoheme IX farnesyltransferase (308 aa).

8 helical membrane-spanning segments follow: residues 31–51 (VIEL…RGTV), 53–73 (PLLI…ANAL), 102–122 (NALV…WWTT), 124–144 (LLSG…YTLL), 149–169 (TSQN…IGWS), 170–190 (AVTG…FFWT), 240–260 (LALA…VWFL), and 288–308 (YLAV…PHLF).

Belongs to the UbiA prenyltransferase family. Protoheme IX farnesyltransferase subfamily.

The protein localises to the cell membrane. The enzyme catalyses heme b + (2E,6E)-farnesyl diphosphate + H2O = Fe(II)-heme o + diphosphate. It functions in the pathway porphyrin-containing compound metabolism; heme O biosynthesis; heme O from protoheme: step 1/1. Functionally, converts heme B (protoheme IX) to heme O by substitution of the vinyl group on carbon 2 of heme B porphyrin ring with a hydroxyethyl farnesyl side group. The sequence is that of Protoheme IX farnesyltransferase from Mycolicibacterium paratuberculosis (strain ATCC BAA-968 / K-10) (Mycobacterium paratuberculosis).